Consider the following 160-residue polypeptide: Sulfur-rich protein (160 aa).

2 helical membrane passes run 63–83 (ITMV…TFVL) and 92–112 (FLFL…SVCM).

The protein localises to the membrane. The chain is Sulfur-rich protein (srp) from Chlamydophila psittaci (strain ATCC VR-125 / 6BC) (Chlamydia psittaci).